The primary structure comprises 81 residues: Photosystem I iron-sulfur center (81 aa).

4Fe-4S ferredoxin-type domains are found at residues 2 to 31 (SHAV…MVPW) and 37 to 68 (GQIA…IRVY). The [4Fe-4S] cluster site is built by C11, C14, C17, C21, C48, C51, C54, and C58.

The cyanobacterial PSI reaction center is composed of one copy each of PsaA,B,C,D,E,F,I,J,K,L,M and X, and forms trimeric complexes. [4Fe-4S] cluster is required as a cofactor.

It localises to the cellular thylakoid membrane. It carries out the reaction reduced [plastocyanin] + hnu + oxidized [2Fe-2S]-[ferredoxin] = oxidized [plastocyanin] + reduced [2Fe-2S]-[ferredoxin]. Functionally, apoprotein for the two 4Fe-4S centers FA and FB of photosystem I (PSI); essential for photochemical activity. FB is the terminal electron acceptor of PSI, donating electrons to ferredoxin. The C-terminus interacts with PsaA/B/D and helps assemble the protein into the PSI complex. Required for binding of PsaD and PsaE to PSI. PSI is a plastocyanin/cytochrome c6-ferredoxin oxidoreductase, converting photonic excitation into a charge separation, which transfers an electron from the donor P700 chlorophyll pair to the spectroscopically characterized acceptors A0, A1, FX, FA and FB in turn. This chain is Photosystem I iron-sulfur center, found in Prochlorococcus marinus subsp. pastoris (strain CCMP1986 / NIES-2087 / MED4).